Consider the following 957-residue polypeptide: Glycine dehydrogenase (decarboxylating) (957 aa).

An N6-(pyridoxal phosphate)lysine modification is found at Lys708.

Belongs to the GcvP family. In terms of assembly, the glycine cleavage system is composed of four proteins: P, T, L and H. Pyridoxal 5'-phosphate is required as a cofactor.

It carries out the reaction N(6)-[(R)-lipoyl]-L-lysyl-[glycine-cleavage complex H protein] + glycine + H(+) = N(6)-[(R)-S(8)-aminomethyldihydrolipoyl]-L-lysyl-[glycine-cleavage complex H protein] + CO2. The glycine cleavage system catalyzes the degradation of glycine. The P protein binds the alpha-amino group of glycine through its pyridoxal phosphate cofactor; CO(2) is released and the remaining methylamine moiety is then transferred to the lipoamide cofactor of the H protein. The polypeptide is Glycine dehydrogenase (decarboxylating) (Escherichia coli O7:K1 (strain IAI39 / ExPEC)).